The sequence spans 650 residues: Threonine--tRNA ligase (650 aa).

One can recognise a TGS domain in the interval 1–61 (MIKITFPDGA…DEDGTLEIVM (61 aa)). Residues 242-540 (DHRKLGKELD…LIETYKGAFP (299 aa)) form a catalytic region. Zn(2+) is bound by residues Cys336, His387, and His517.

The protein belongs to the class-II aminoacyl-tRNA synthetase family. Homodimer. Zn(2+) serves as cofactor.

Its subcellular location is the cytoplasm. It carries out the reaction tRNA(Thr) + L-threonine + ATP = L-threonyl-tRNA(Thr) + AMP + diphosphate + H(+). Functionally, catalyzes the attachment of threonine to tRNA(Thr) in a two-step reaction: L-threonine is first activated by ATP to form Thr-AMP and then transferred to the acceptor end of tRNA(Thr). Also edits incorrectly charged L-seryl-tRNA(Thr). This Streptococcus suis (strain 98HAH33) protein is Threonine--tRNA ligase.